Reading from the N-terminus, the 387-residue chain is Succinate--CoA ligase [ADP-forming] subunit beta (387 aa).

One can recognise an ATP-grasp domain in the interval 9–244 (KEVLRKFGVA…LNEEEPSEIE (236 aa)). Residues K46, 53–55 (GRG), E99, C102, and E107 each bind ATP. Mg(2+)-binding residues include N199 and D213. Substrate contacts are provided by residues N264 and 321-323 (GIM).

Belongs to the succinate/malate CoA ligase beta subunit family. Heterotetramer of two alpha and two beta subunits. It depends on Mg(2+) as a cofactor.

It catalyses the reaction succinate + ATP + CoA = succinyl-CoA + ADP + phosphate. The enzyme catalyses GTP + succinate + CoA = succinyl-CoA + GDP + phosphate. It participates in carbohydrate metabolism; tricarboxylic acid cycle; succinate from succinyl-CoA (ligase route): step 1/1. Functionally, succinyl-CoA synthetase functions in the citric acid cycle (TCA), coupling the hydrolysis of succinyl-CoA to the synthesis of either ATP or GTP and thus represents the only step of substrate-level phosphorylation in the TCA. The beta subunit provides nucleotide specificity of the enzyme and binds the substrate succinate, while the binding sites for coenzyme A and phosphate are found in the alpha subunit. The sequence is that of Succinate--CoA ligase [ADP-forming] subunit beta from Bdellovibrio bacteriovorus (strain ATCC 15356 / DSM 50701 / NCIMB 9529 / HD100).